A 201-amino-acid chain; its full sequence is UPF0301 protein MSMEG_6921/MSMEI_6732 (201 aa).

The protein belongs to the UPF0301 (AlgH) family.

This chain is UPF0301 protein MSMEG_6921/MSMEI_6732, found in Mycolicibacterium smegmatis (strain ATCC 700084 / mc(2)155) (Mycobacterium smegmatis).